The primary structure comprises 630 residues: Plastin-1 (630 aa).

Residue Met1 is modified to N-acetylmethionine. EF-hand domains are found at residues 11–46 and 51–86; these read EELE…ASLP and KVRE…LKSK. Positions 24, 26, 28, 30, 35, 64, 66, 68, 70, and 75 each coordinate Ca(2+). 2 actin-binding regions span residues 108-381 and 382-626; these read TSSI…GLHK and PDNN…GKGL. Calponin-homology (CH) domains follow at residues 122–238, 266–377, 396–505, and 517–626; these read EEEK…KVGL, LSPE…NTYP, SKEE…RRYT, and KVND…GKGL.

As to quaternary structure, monomer. In terms of processing, phosphorylated.

It localises to the cytoplasm. It is found in the cell projection. The protein resides in the stereocilium. Its function is as follows. Actin-bundling protein. In the inner ear, it is required for stereocilia formation. Mediates liquid packing of actin filaments that is necessary for stereocilia to grow to their proper dimensions. The chain is Plastin-1 (PLS1) from Bos taurus (Bovine).